A 142-amino-acid polypeptide reads, in one-letter code: Alpha-lactalbumin (142 aa).

The first 19 residues, 1–19, serve as a signal peptide directing secretion; the sequence is MMSFVSLLLVGILFHATQA. The C-type lysozyme domain occupies 20-142; sequence EQLTKCEVFR…KLDQWLCEKL (123 aa). Intrachain disulfides connect C25-C139, C47-C130, C80-C96, and C92-C110. N64 is a glycosylation site (N-linked (GlcNAc...) asparagine). Ca(2+)-binding residues include K98, D101, D103, D106, and D107.

Belongs to the glycosyl hydrolase 22 family. In terms of assembly, lactose synthase (LS) is a heterodimer of a catalytic component, beta1,4-galactosyltransferase (beta4Gal-T1) and a regulatory component, alpha-lactalbumin (LA). As to expression, mammary gland specific. Secreted in milk.

The protein localises to the secreted. Regulatory subunit of lactose synthase, changes the substrate specificity of galactosyltransferase in the mammary gland making glucose a good acceptor substrate for this enzyme. This enables LS to synthesize lactose, the major carbohydrate component of milk. In other tissues, galactosyltransferase transfers galactose onto the N-acetylglucosamine of the oligosaccharide chains in glycoproteins. This chain is Alpha-lactalbumin (LALBA), found in Bos taurus (Bovine).